We begin with the raw amino-acid sequence, 549 residues long: MKLERVSSNGSFKRGRDIQSLESPCTRPLKKMSPSPSFTSLKMEKPFKDIVRKYGGHLHQSSYNPGSSKVELVRPDLSLKTDQSFLQSSVQTTPNKKSCNEYLSTPEATPLKNTATENAWATSRVVSASSLSIVTPTEIKNILVDEFSELKLGQPLTAQHQRSHAVFEIPEIVENIIKMIVSLESANIPKERPCLRRNPQSYEHSLLMYKDEERAKKAWSAAQQLRDPPLVGHKEKKQGALFSCMMVNRLWLNVTRPFLFKSLHFKSVHNFKEFLRTSQETTQVMRPSHFILHKLHQVTQPDIERLSRMECQNLKWLEFYVCPRITPPLSWFDNLHKLEKLIIPGNKNIDDNFLLRLSQSIPNLKHLVLRACDNVSDSGVVCIALNCPKLKTFNIGRHRRGNLITSVSLVALGKYTQVETVGFAGCDVDDAGIWEFARLNGKNVERLSLNSCRLLTDYSLPILFALNSFPNLAVLEIRNLDKITDVRHFVKYNLWKKSLDAPILIEACERITKLIDQEENRVKRINSLVALKDMTAWVNADDEIENNVD.

The segment covering 1 to 11 has biased composition (polar residues); the sequence is MKLERVSSNGS. Positions 1–39 are disordered; the sequence is MKLERVSSNGSFKRGRDIQSLESPCTRPLKKMSPSPSFT.

It belongs to the AMN1 family. Interacts with TEM1.

It localises to the cytoplasm. Its subcellular location is the nucleus. Its function is as follows. Negative regulator of the mitotic exit network (MEN), required for multiple cell cycle checkpoints. Acts in the daughter cell to inhibit the mitotic exit pathway once MEN has executed its function. Through its binding ability to TEM1, interferes with the TEM1-CDC5 association, required for CDC5 kinase activation and MEN activation. Required for daughter cell separation and chromosome stability. Involved in copper sensitivity. This Saccharomyces cerevisiae (strain ATCC 204508 / S288c) (Baker's yeast) protein is Antagonist of mitotic exit network protein 1 (AMN1).